The primary structure comprises 284 residues: Bifunctional protein FolD (284 aa).

Residues 166–168 (GAS) and Ile-232 each bind NADP(+).

Belongs to the tetrahydrofolate dehydrogenase/cyclohydrolase family. Homodimer.

It catalyses the reaction (6R)-5,10-methylene-5,6,7,8-tetrahydrofolate + NADP(+) = (6R)-5,10-methenyltetrahydrofolate + NADPH. It carries out the reaction (6R)-5,10-methenyltetrahydrofolate + H2O = (6R)-10-formyltetrahydrofolate + H(+). It functions in the pathway one-carbon metabolism; tetrahydrofolate interconversion. In terms of biological role, catalyzes the oxidation of 5,10-methylenetetrahydrofolate to 5,10-methenyltetrahydrofolate and then the hydrolysis of 5,10-methenyltetrahydrofolate to 10-formyltetrahydrofolate. The sequence is that of Bifunctional protein FolD from Pseudomonas entomophila (strain L48).